The primary structure comprises 98 residues: Large ribosomal subunit protein uL23 (98 aa).

Belongs to the universal ribosomal protein uL23 family. In terms of assembly, part of the 50S ribosomal subunit. Contacts protein L29, and trigger factor when it is bound to the ribosome.

Functionally, one of the early assembly proteins it binds 23S rRNA. One of the proteins that surrounds the polypeptide exit tunnel on the outside of the ribosome. Forms the main docking site for trigger factor binding to the ribosome. The sequence is that of Large ribosomal subunit protein uL23 from Clostridium beijerinckii (strain ATCC 51743 / NCIMB 8052) (Clostridium acetobutylicum).